The chain runs to 193 residues: 7-methyl-GTP pyrophosphatase (193 aa).

Residue D70 is the Proton acceptor of the active site.

The protein belongs to the Maf family. YceF subfamily. A divalent metal cation serves as cofactor.

It localises to the cytoplasm. It catalyses the reaction N(7)-methyl-GTP + H2O = N(7)-methyl-GMP + diphosphate + H(+). In terms of biological role, nucleoside triphosphate pyrophosphatase that hydrolyzes 7-methyl-GTP (m(7)GTP). May have a dual role in cell division arrest and in preventing the incorporation of modified nucleotides into cellular nucleic acids. The polypeptide is 7-methyl-GTP pyrophosphatase (Aliivibrio fischeri (strain ATCC 700601 / ES114) (Vibrio fischeri)).